The primary structure comprises 364 residues: 4-hydroxy-3-methylbut-2-en-1-yl diphosphate synthase (flavodoxin) (364 aa).

4 residues coordinate [4Fe-4S] cluster: Cys-268, Cys-271, Cys-303, and Glu-310.

Belongs to the IspG family. The cofactor is [4Fe-4S] cluster.

The catalysed reaction is (2E)-4-hydroxy-3-methylbut-2-enyl diphosphate + oxidized [flavodoxin] + H2O + 2 H(+) = 2-C-methyl-D-erythritol 2,4-cyclic diphosphate + reduced [flavodoxin]. It participates in isoprenoid biosynthesis; isopentenyl diphosphate biosynthesis via DXP pathway; isopentenyl diphosphate from 1-deoxy-D-xylulose 5-phosphate: step 5/6. In terms of biological role, converts 2C-methyl-D-erythritol 2,4-cyclodiphosphate (ME-2,4cPP) into 1-hydroxy-2-methyl-2-(E)-butenyl 4-diphosphate. The polypeptide is 4-hydroxy-3-methylbut-2-en-1-yl diphosphate synthase (flavodoxin) (Desulfotalea psychrophila (strain LSv54 / DSM 12343)).